The chain runs to 210 residues: 3-hexulose-6-phosphate synthase (210 aa).

This sequence belongs to the HPS/KGPDC family. HPS subfamily.

The enzyme catalyses D-ribulose 5-phosphate + formaldehyde = D-arabino-hex-3-ulose 6-phosphate. The protein operates within one-carbon metabolism; formaldehyde assimilation via RuMP pathway; D-fructose 6-phosphate from D-ribulose 5-phosphate and formaldehyde: step 1/2. Catalyzes the condensation of ribulose 5-phosphate with formaldehyde to form 3-hexulose 6-phosphate. The chain is 3-hexulose-6-phosphate synthase from Staphylococcus haemolyticus (strain JCSC1435).